Reading from the N-terminus, the 101-residue chain is Large ribosomal subunit protein eL21 (101 aa).

Over residues Met-1 to Lys-18 the composition is skewed to basic residues. The interval Met-1–Gly-24 is disordered.

Belongs to the eukaryotic ribosomal protein eL21 family.

The protein is Large ribosomal subunit protein eL21 (rpl21e) of Saccharolobus solfataricus (strain ATCC 35092 / DSM 1617 / JCM 11322 / P2) (Sulfolobus solfataricus).